Here is a 121-residue protein sequence, read N- to C-terminus: Small ribosomal subunit protein uS13 (121 aa).

The tract at residues 93-121 (RGLPVRGQNTKNNARTRKGPRRTVANKKK) is disordered. Basic residues predominate over residues 106–121 (ARTRKGPRRTVANKKK).

The protein belongs to the universal ribosomal protein uS13 family. As to quaternary structure, part of the 30S ribosomal subunit. Forms a loose heterodimer with protein S19. Forms two bridges to the 50S subunit in the 70S ribosome.

Located at the top of the head of the 30S subunit, it contacts several helices of the 16S rRNA. In the 70S ribosome it contacts the 23S rRNA (bridge B1a) and protein L5 of the 50S subunit (bridge B1b), connecting the 2 subunits; these bridges are implicated in subunit movement. Contacts the tRNAs in the A and P-sites. The polypeptide is Small ribosomal subunit protein uS13 (Bacillus licheniformis (strain ATCC 14580 / DSM 13 / JCM 2505 / CCUG 7422 / NBRC 12200 / NCIMB 9375 / NCTC 10341 / NRRL NRS-1264 / Gibson 46)).